A 290-amino-acid polypeptide reads, in one-letter code: MKVIVLLLVLAVMQPVIQSQPFPGTGELPMTRRPPKKELEYWCTYAKSCDFCWNCRHGVCKNKVFEKHPLIKKNDYIQICRVSRYNERCSYFTDTRIRRFHIMSCTNPTYYDWFDELMQVKEDRVIDTENIKHTCLCMIATIALIGYIRKQYSRMQLQAATRLLIFLGLYVLLGILMTNIIMNLPLSTDNPMQMRRPPERDLKFWCTYAKHCDFCWTCKDGMCKNKVFSDHPIITQNDYIVNCTVSRWHDRCMYEAHFRIHYQHNMNCSQPKDLEWFIELKRHVINQDDL.

3 helical membrane-spanning segments follow: residues 1-19, 128-148, and 163-183; these read MKVIVLLLVLAVMQPVIQS, TENIKHTCLCMIATIALIGYI, and LLIFLGLYVLLGILMTNIIMN. Asparagine 242 and asparagine 267 each carry an N-linked (GlcNAc...) asparagine; by host glycan.

The protein belongs to the asfivirus MGF 110 family.

Its subcellular location is the host membrane. Functionally, plays a role in virus cell tropism, and may be required for efficient virus replication in macrophages. In Ornithodoros (relapsing fever ticks), this protein is Protein MGF 110-9L.